The following is a 318-amino-acid chain: 2-keto-3-deoxygluconate permease (318 aa).

10 helical membrane passes run 10-30, 42-62, 76-96, 105-125, 139-159, 163-183, 199-219, 224-244, 263-283, and 289-309; these read IPGGLMLVPLFLGALCNTFTP, GLITGTIPILAVWFFCMGASI, VLVVTKIATAWVVALIAGTFL, MLAGISVLALVAAMDMTNGGL, AGAFVLMSLESGPLMTMVILG, IATFEPQLFVGAVLPFLIGFA, VQTLIPFFAFALGNTINLSVI, FAGIFLGLLVIVVTGIPLILA, AGAAVATPLLIANMAPEFAPV, and ALVATSVIVTSVLVPIITALW.

It belongs to the KdgT transporter family.

The protein resides in the cell inner membrane. The enzyme catalyses 2-dehydro-3-deoxy-D-gluconate(in) + H(+)(in) = 2-dehydro-3-deoxy-D-gluconate(out) + H(+)(out). In terms of biological role, catalyzes the proton-dependent uptake of 2-keto-3-deoxygluconate (KDG) into the cell. In Pectobacterium carotovorum subsp. carotovorum (Erwinia carotovora subsp. carotovora), this protein is 2-keto-3-deoxygluconate permease.